We begin with the raw amino-acid sequence, 431 residues long: Glutamate--tRNA ligase 1 (431 aa).

Positions 6–16 (PSPTGDMHIGN) match the 'HIGH' region motif. Residues 235-239 (KMSKR) carry the 'KMSKS' region motif. Position 238 (lysine 238) interacts with ATP.

The protein belongs to the class-I aminoacyl-tRNA synthetase family. Glutamate--tRNA ligase type 1 subfamily. In terms of assembly, monomer.

It localises to the cytoplasm. It carries out the reaction tRNA(Glu) + L-glutamate + ATP = L-glutamyl-tRNA(Glu) + AMP + diphosphate. Catalyzes the attachment of glutamate to tRNA(Glu) in a two-step reaction: glutamate is first activated by ATP to form Glu-AMP and then transferred to the acceptor end of tRNA(Glu). The sequence is that of Glutamate--tRNA ligase 1 from Campylobacter jejuni subsp. jejuni serotype O:6 (strain 81116 / NCTC 11828).